A 467-amino-acid chain; its full sequence is Acyl-CoA-binding domain-containing protein 5 (467 aa).

The ACB domain occupies 8–97 (HQTRFEAAVS…MKKIIETMPV (90 aa)). An acyl-CoA is bound by residues 19 to 28 (IQSLPKNGSF), 39 to 43 (YSFYK), Lys65, and Tyr84. 3 disordered regions span residues 119–204 (KHGR…IVLN), 219–240 (TPLP…EGEP), and 304–376 (ITEN…DRGP). Residues 125–139 (GVTSELGSVLTSTPN) are compositionally biased toward polar residues. Positions 170–187 (DEEDEEDETEHSEEEEKE) are enriched in acidic residues. 2 stretches are compositionally biased toward basic and acidic residues: residues 312–322 (ELKDGGEDGKQ) and 335–347 (KSEH…ERSL). The span at 352-372 (GGEGSRSGQIGSSGDGDGWGS) shows a compositional bias: gly residues. Residues 382 to 411 (EQIAVVLMRLQEDMQNVLQRLHSLEVQTAS) adopt a coiled-coil conformation. The chain crosses the membrane as a helical span at residues 439–459 (GTLALAVVWPFVVHWLMHVFL).

It belongs to the ATG37 family.

Its subcellular location is the peroxisome membrane. Acyl-CoA binding protein which acts as the peroxisome receptor for pexophagy but is dispensable for aggrephagy and nonselective autophagy. Binds medium- and long-chain acyl-CoA esters. The chain is Acyl-CoA-binding domain-containing protein 5 (acbd5) from Xenopus laevis (African clawed frog).